The chain runs to 179 residues: ATP synthase subunit delta (179 aa).

It belongs to the ATPase delta chain family. F-type ATPases have 2 components, F(1) - the catalytic core - and F(0) - the membrane proton channel. F(1) has five subunits: alpha(3), beta(3), gamma(1), delta(1), epsilon(1). F(0) has three main subunits: a(1), b(2) and c(10-14). The alpha and beta chains form an alternating ring which encloses part of the gamma chain. F(1) is attached to F(0) by a central stalk formed by the gamma and epsilon chains, while a peripheral stalk is formed by the delta and b chains.

The protein resides in the cell membrane. Functionally, f(1)F(0) ATP synthase produces ATP from ADP in the presence of a proton or sodium gradient. F-type ATPases consist of two structural domains, F(1) containing the extramembraneous catalytic core and F(0) containing the membrane proton channel, linked together by a central stalk and a peripheral stalk. During catalysis, ATP synthesis in the catalytic domain of F(1) is coupled via a rotary mechanism of the central stalk subunits to proton translocation. Its function is as follows. This protein is part of the stalk that links CF(0) to CF(1). It either transmits conformational changes from CF(0) to CF(1) or is implicated in proton conduction. The polypeptide is ATP synthase subunit delta (Clostridium botulinum (strain Alaska E43 / Type E3)).